The following is a 454-amino-acid chain: Protection of telomeres protein 1b (454 aa).

It belongs to the telombin family. As to quaternary structure, interacts with TRB1, TRB2 and TRB3. As to expression, expressed at low levels in roots, rosette leaves, cauline leaves, stems and flowers.

The protein resides in the nucleus. Its subcellular location is the chromosome. It localises to the telomere. Functionally, negatively regulates telomerase activity and participates in chromosome end protection. Binds RNA non-specifically. Associates with a regulatory Pol III-dependent lncRNA, which represses telomerase activity in response to DNA damage. Binds single-stranded telomeric DNA with weak affinity. The chain is Protection of telomeres protein 1b from Arabidopsis thaliana (Mouse-ear cress).